The sequence spans 145 residues: uncharacterized protein (145 aa).

This is an uncharacterized protein from Rickettsia prowazekii (strain Madrid E).